The chain runs to 163 residues: Nucleotide-binding protein syc0675_c (163 aa).

Belongs to the YajQ family.

In terms of biological role, nucleotide-binding protein. This is Nucleotide-binding protein syc0675_c from Synechococcus sp. (strain ATCC 27144 / PCC 6301 / SAUG 1402/1) (Anacystis nidulans).